Reading from the N-terminus, the 493-residue chain is 11S globulin seed storage protein G3 (493 aa).

A signal peptide spans 1-20; sequence MASKATLLLAFTLLFATCIA. Intrachain disulfides connect cysteine 32–cysteine 65 and cysteine 103–cysteine 312. The Cupin type-1 1 domain occupies 37–248; it reads IEALEPIEVI…SFNVDQETAQ (212 aa). Disordered stretches follow at residues 190–229 and 269–305; these read PQAQ…NIFN and IVRP…GWSN. 2 stretches are compositionally biased toward low complexity: residues 191-221 and 280-298; these read QAQA…QGQG and RQQQ…QQQG. Positions 318-467 constitute a Cupin type-1 2 domain; it reads VNIDNPSQAD…RYQLSREEAQ (150 aa).

The protein belongs to the 11S seed storage protein (globulins) family. Hexamer; each subunit is composed of an acidic and a basic chain derived from a single precursor and linked by a disulfide bond.

In terms of biological role, this is a seed storage protein. This chain is 11S globulin seed storage protein G3 (HAG3), found in Helianthus annuus (Common sunflower).